The chain runs to 564 residues: Sulfite reductase [NADPH] hemoprotein beta-component 1 (564 aa).

The [4Fe-4S] cluster site is built by Cys-426, Cys-432, Cys-471, and Cys-475. Cys-475 serves as a coordination point for siroheme.

It belongs to the nitrite and sulfite reductase 4Fe-4S domain family. In terms of assembly, alpha(8)-beta(8). The alpha component is a flavoprotein, the beta component is a hemoprotein. Siroheme is required as a cofactor. The cofactor is [4Fe-4S] cluster.

The catalysed reaction is hydrogen sulfide + 3 NADP(+) + 3 H2O = sulfite + 3 NADPH + 4 H(+). It participates in sulfur metabolism; hydrogen sulfide biosynthesis; hydrogen sulfide from sulfite (NADPH route): step 1/1. Functionally, component of the sulfite reductase complex that catalyzes the 6-electron reduction of sulfite to sulfide. This is one of several activities required for the biosynthesis of L-cysteine from sulfate. The polypeptide is Sulfite reductase [NADPH] hemoprotein beta-component 1 (Pectobacterium carotovorum subsp. carotovorum (strain PC1)).